Here is a 391-residue protein sequence, read N- to C-terminus: NADH-quinone oxidoreductase subunit D (391 aa).

Belongs to the complex I 49 kDa subunit family. In terms of assembly, NDH-1 is composed of 14 different subunits. Subunits NuoB, C, D, E, F, and G constitute the peripheral sector of the complex.

Its subcellular location is the cell inner membrane. The catalysed reaction is a quinone + NADH + 5 H(+)(in) = a quinol + NAD(+) + 4 H(+)(out). Functionally, NDH-1 shuttles electrons from NADH, via FMN and iron-sulfur (Fe-S) centers, to quinones in the respiratory chain. The immediate electron acceptor for the enzyme in this species is believed to be ubiquinone. Couples the redox reaction to proton translocation (for every two electrons transferred, four hydrogen ions are translocated across the cytoplasmic membrane), and thus conserves the redox energy in a proton gradient. The sequence is that of NADH-quinone oxidoreductase subunit D from Rickettsia rickettsii (strain Iowa).